A 292-amino-acid chain; its full sequence is 4-hydroxy-tetrahydrodipicolinate synthase (292 aa).

Residue threonine 45 coordinates pyruvate. Tyrosine 133 (proton donor/acceptor) is an active-site residue. The Schiff-base intermediate with substrate role is filled by lysine 162. Pyruvate is bound at residue isoleucine 204.

It belongs to the DapA family. In terms of assembly, homotetramer; dimer of dimers.

The protein localises to the cytoplasm. The catalysed reaction is L-aspartate 4-semialdehyde + pyruvate = (2S,4S)-4-hydroxy-2,3,4,5-tetrahydrodipicolinate + H2O + H(+). Its pathway is amino-acid biosynthesis; L-lysine biosynthesis via DAP pathway; (S)-tetrahydrodipicolinate from L-aspartate: step 3/4. Functionally, catalyzes the condensation of (S)-aspartate-beta-semialdehyde [(S)-ASA] and pyruvate to 4-hydroxy-tetrahydrodipicolinate (HTPA). The sequence is that of 4-hydroxy-tetrahydrodipicolinate synthase from Maridesulfovibrio salexigens (strain ATCC 14822 / DSM 2638 / NCIMB 8403 / VKM B-1763) (Desulfovibrio salexigens).